Here is a 394-residue protein sequence, read N- to C-terminus: 1-deoxy-D-xylulose 5-phosphate reductoisomerase (394 aa).

Positions 10, 11, 12, 13, 38, and 125 each coordinate NADPH. Lys-126 is a binding site for 1-deoxy-D-xylulose 5-phosphate. Glu-127 lines the NADPH pocket. Mn(2+) is bound at residue Asp-151. The 1-deoxy-D-xylulose 5-phosphate site is built by Ser-152, Glu-153, Ser-182, and His-205. Position 153 (Glu-153) interacts with Mn(2+). Gly-211 serves as a coordination point for NADPH. Positions 218, 223, 224, and 227 each coordinate 1-deoxy-D-xylulose 5-phosphate. Mn(2+) is bound at residue Glu-227.

This sequence belongs to the DXR family. The cofactor is Mg(2+). It depends on Mn(2+) as a cofactor.

The enzyme catalyses 2-C-methyl-D-erythritol 4-phosphate + NADP(+) = 1-deoxy-D-xylulose 5-phosphate + NADPH + H(+). Its pathway is isoprenoid biosynthesis; isopentenyl diphosphate biosynthesis via DXP pathway; isopentenyl diphosphate from 1-deoxy-D-xylulose 5-phosphate: step 1/6. In terms of biological role, catalyzes the NADPH-dependent rearrangement and reduction of 1-deoxy-D-xylulose-5-phosphate (DXP) to 2-C-methyl-D-erythritol 4-phosphate (MEP). The chain is 1-deoxy-D-xylulose 5-phosphate reductoisomerase from Methylococcus capsulatus (strain ATCC 33009 / NCIMB 11132 / Bath).